The sequence spans 429 residues: Malate dehydrogenase [NADP] 1, chloroplastic (429 aa).

Residues M1 to C40 constitute a chloroplast transit peptide. A disulfide bridge connects residues C64 and C69. Position 93–99 (G93–S99) interacts with NADP(+). 2 residues coordinate substrate: R174 and R180. Residues N187, Q194, and V211–N213 each bind NADP(+). Residues N213 and R244 each coordinate substrate. H269 functions as the Proton acceptor in the catalytic mechanism. The cysteines at positions 405 and 417 are disulfide-linked.

This sequence belongs to the LDH/MDH superfamily. MDH type 2 family. In terms of assembly, homodimer.

The protein localises to the plastid. It is found in the chloroplast. It catalyses the reaction (S)-malate + NADP(+) = oxaloacetate + NADPH + H(+). Chloroplast NADP-MDH is activated upon illumination. In order to be enzymatically active, disulfide bridges on the protein must be reduced by thioredoxin which receives electrons from ferredoxin and the electron transport system of photosynthesis. Functionally, the chloroplastic, NADP-dependent form is essential for the photosynthesis C4 cycle, which allows plants to circumvent the problem of photorespiration. In C4 plants, NADP-MDH activity acts to convert oxaloacetate to malate in chloroplasts of mesophyll cells for transport to the bundle sheath cells. The chain is Malate dehydrogenase [NADP] 1, chloroplastic from Sorghum bicolor (Sorghum).